The chain runs to 524 residues: MNLFVALSKKKKYQHKLFAPYLRPSTDTTTTETRFMLSTCLIRNCVFIRPRLSVICFKAIRYQSKKSDFPDYTKINDPKLREIIEGSNFGTEAILKKQREDQDKKKKMEQERKRLEQEREVDRRREEKRAKEESESNKTDNDNEANQHTDDKLAKVNEKLESNFSKTESGKLRGEDTGTRETVVETEEEEELKLKAENKIIATSKDSVDESDIPNLAKEINETIQKEIAGLPSQKAKNQSKLAKNLTKYLDSAHDTILTATRALNDVTGYSAIEKLKKSIETQEDDLKKAKEKVKQCKIAYGEAIQRRSHSQREVNELLTRKHNWSSNDLERFTELYRNDHENEIHEQEAEKKLDEAESKVDGVQLKLTQSILTRYHEEQIWSDKIRRSSTWGTWVLMGLNVLLFVVATFIVEPWKRSKLVSAFEDKVKQVLVGISQENEQILDPIIEKLEPTDGQVPIKTSFDFKFVTNTWHGLKAALVRNYEALMSPEITNLEFDKFEFELFTMTVAIVAFSMGSLIVSLFK.

Residues 92-133 (EAILKKQREDQDKKKKMEQERKRLEQEREVDRRREEKRAKEE) adopt a coiled-coil conformation. Basic and acidic residues-rich tracts occupy residues 94-161 (ILKK…EKLE) and 168-183 (ESGKLRGEDTGTRETV). The tract at residues 94-190 (ILKKQREDQD…ETVVETEEEE (97 aa)) is disordered. Coiled coils occupy residues 270–304 (YSAIEKLKKSIETQEDDLKKAKEKVKQCKIAYGEA) and 338–371 (RNDHENEIHEQEAEKKLDEAESKVDGVQLKLTQS). Residues 392 to 412 (WGTWVLMGLNVLLFVVATFIV) form a helical membrane-spanning segment. Residues 413–502 (EPWKRSKLVS…NLEFDKFEFE (90 aa)) are Mitochondrial intermembrane-facing. Residues 503–523 (LFTMTVAIVAFSMGSLIVSLF) traverse the membrane as a helical segment. Lysine 524 is a topological domain (mitochondrial matrix).

It belongs to the SHE9 family. As to quaternary structure, homooligomer.

Its subcellular location is the mitochondrion inner membrane. Required for the maintenance of the structure of the mitochondrial inner membrane. Involved in mitochondrial morphology. Causes growth arrest when highly overexpressed. This is Sensitive to high expression protein 9 homolog, mitochondrial (SHE9) from Candida albicans (strain SC5314 / ATCC MYA-2876) (Yeast).